We begin with the raw amino-acid sequence, 443 residues long: 3-phosphoshikimate 1-carboxyvinyltransferase (443 aa).

3-phosphoshikimate contacts are provided by lysine 24, serine 25, and arginine 29. Lysine 24 provides a ligand contact to phosphoenolpyruvate. Phosphoenolpyruvate-binding residues include glycine 96 and arginine 124. 3-phosphoshikimate contacts are provided by serine 168, glutamine 170, aspartate 316, and lysine 343. Glutamine 170 provides a ligand contact to phosphoenolpyruvate. Aspartate 316 serves as the catalytic Proton acceptor. 2 residues coordinate phosphoenolpyruvate: arginine 347 and arginine 391.

Belongs to the EPSP synthase family. As to quaternary structure, monomer.

It localises to the cytoplasm. It catalyses the reaction 3-phosphoshikimate + phosphoenolpyruvate = 5-O-(1-carboxyvinyl)-3-phosphoshikimate + phosphate. It functions in the pathway metabolic intermediate biosynthesis; chorismate biosynthesis; chorismate from D-erythrose 4-phosphate and phosphoenolpyruvate: step 6/7. In terms of biological role, catalyzes the transfer of the enolpyruvyl moiety of phosphoenolpyruvate (PEP) to the 5-hydroxyl of shikimate-3-phosphate (S3P) to produce enolpyruvyl shikimate-3-phosphate and inorganic phosphate. The chain is 3-phosphoshikimate 1-carboxyvinyltransferase from Dichelobacter nodosus (Bacteroides nodosus).